The primary structure comprises 313 residues: Nucleoside diphosphate-linked moiety X motif 6 (313 aa).

The Nudix hydrolase domain maps to 138-270 (THQVGVAGAV…TSRVARLLLY (133 aa)).

It belongs to the Nudix hydrolase family. In terms of assembly, monomer and homodimer.

It localises to the cytoplasm. The protein resides in the nucleus. It is found in the mitochondrion. Its function is as follows. May contribute to the regulation of cell proliferation. The chain is Nucleoside diphosphate-linked moiety X motif 6 (Nudt6) from Mus musculus (Mouse).